We begin with the raw amino-acid sequence, 320 residues long: Probable L,D-transpeptidase YcfS (320 aa).

An N-terminal signal peptide occupies residues 1–23; that stretch reads MMIKTRFSRWLTFFTFAAAVALA. Positions 45-90 constitute a LysM domain; sequence KFHVVENDGGSLEAIAKKYNVGFLALLQANPGVDPYVPRAGSVLTI. Positions 102–241 constitute a L,D-TPase catalytic domain; that stretch reads EGIVINIAEL…VTPGTKVNII (140 aa). His201 (proton donor/acceptor) is an active-site residue. The active-site Nucleophile is the Cys217.

It belongs to the YkuD family. In terms of assembly, interacts with DsbG.

It is found in the periplasm. It functions in the pathway cell wall biogenesis; peptidoglycan biosynthesis. Responsible, at least in part, for anchoring of the major outer membrane lipoprotein (Lpp, also known as the Braun lipoprotein) to the peptidoglycan via a meso-diaminopimelyl-L-Lys- bond on the terminal residue of Lpp. This Escherichia coli (strain K12) protein is Probable L,D-transpeptidase YcfS (ycfS).